We begin with the raw amino-acid sequence, 475 residues long: Glutamate--tRNA ligase 1 (475 aa).

The short motif at 11 to 21 is the 'HIGH' region element; sequence PSPTGYLHIGG. The 'KMSKS' region signature appears at 240 to 244; the sequence is KLSKR. Lys-243 is an ATP binding site.

It belongs to the class-I aminoacyl-tRNA synthetase family. Glutamate--tRNA ligase type 1 subfamily. As to quaternary structure, monomer.

It localises to the cytoplasm. It carries out the reaction tRNA(Glu) + L-glutamate + ATP = L-glutamyl-tRNA(Glu) + AMP + diphosphate. Functionally, catalyzes the attachment of glutamate to tRNA(Glu) in a two-step reaction: glutamate is first activated by ATP to form Glu-AMP and then transferred to the acceptor end of tRNA(Glu). In Methylobacterium radiotolerans (strain ATCC 27329 / DSM 1819 / JCM 2831 / NBRC 15690 / NCIMB 10815 / 0-1), this protein is Glutamate--tRNA ligase 1.